We begin with the raw amino-acid sequence, 74 residues long: Antimicrobial peptide HsAp4 (74 aa).

The first 21 residues, methionine 1–glycine 21, serve as a signal peptide directing secretion. Positions methionine 22 to isoleucine 33 are excised as a propeptide. Arginine 65 bears the Arginine amide mark. A propeptide spanning residues alanine 69–threonine 74 is cleaved from the precursor.

It belongs to the non-disulfide-bridged peptide (NDBP) superfamily. Medium-length antimicrobial peptide (group 3) family. Expressed by the venom gland.

The protein resides in the secreted. It localises to the target cell membrane. Possesses antimicrobial activity against both Gram-negative and Gram-positive bacteria, as well as against the fungus C.tropicalis. Also possesses a relatively high hemolytic activity. May act by disrupting the integrity of the bacterial cell membrane. The polypeptide is Antimicrobial peptide HsAp4 (Heterometrus spinifer (Asia giant forest scorpion)).